The sequence spans 141 residues: Hemoglobin subunit alpha (141 aa).

One can recognise a Globin domain in the interval 1-141; that stretch reads VLSAADKAHV…VSTVLTSKYR (141 aa). S3 carries the post-translational modification Phosphoserine. Residues K7 and K11 each carry the N6-succinyllysine modification. Position 16 is an N6-acetyllysine; alternate (K16). N6-succinyllysine; alternate is present on K16. Y24 carries the post-translational modification Phosphotyrosine. S35 bears the Phosphoserine mark. K40 carries the post-translational modification N6-succinyllysine. Position 49 is a phosphoserine (S49). Residue H58 coordinates O2. Residue H87 coordinates heme b. T108 is modified (phosphothreonine). Phosphoserine is present on S124. 2 positions are modified to phosphothreonine: T134 and T137. A Phosphoserine modification is found at S138.

This sequence belongs to the globin family. Heterotetramer of two alpha chains and two beta chains. As to expression, red blood cells.

Involved in oxygen transport from the lung to the various peripheral tissues. Functionally, hemopressin acts as an antagonist peptide of the cannabinoid receptor CNR1. Hemopressin-binding efficiently blocks cannabinoid receptor CNR1 and subsequent signaling. In Bradypus tridactylus (Pale-throated three-toed sloth), this protein is Hemoglobin subunit alpha (HBA).